The following is a 598-amino-acid chain: (+)-bornyl diphosphate synthase, chloroplastic (598 aa).

Residues Met1–Ile54 constitute a chloroplast transit peptide. Arg314 is a substrate binding site. Mg(2+) is bound by residues Asp351 and Asp355. Residues Asp351–Asp355 carry the DDXXD motif motif. Arg493 serves as a coordination point for substrate. The Mg(2+) site is built by Asp496, Thr500, and Glu504. Residue Thr500 coordinates substrate. Lys512 is a binding site for substrate.

The protein belongs to the terpene synthase family. In terms of assembly, homodimer. Mg(2+) is required as a cofactor.

The protein localises to the plastid. The protein resides in the chloroplast. It carries out the reaction (2E)-geranyl diphosphate = (2S,4R)-bornyl diphosphate. The catalysed reaction is (2E)-geranyl diphosphate = (1R,4S)-camphene + diphosphate. The enzyme catalyses (2E)-geranyl diphosphate = (1R,5R)-alpha-pinene + diphosphate. It participates in terpene metabolism; (R)-camphor biosynthesis. Catalyzes the formation of the (+)-camphor precursor (+)-bornyl diphosphate from geranyl diphosphate. The enzyme also produces significant amounts of (+)-alpha-pinene, (+)-camphene, and (+-)-limonene. The sequence is that of (+)-bornyl diphosphate synthase, chloroplastic from Salvia officinalis (Sage).